The following is a 419-amino-acid chain: eIF5-mimic protein 1 (419 aa).

Residues 1–22 (MNKHQKPVLTGQRFKTRKRDEK) form a disordered region. Position 117 is an N6-acetyllysine (Lys117). The region spanning 248-415 (VQQSLGTRKE…QNAEEESESE (168 aa)) is the W2 domain. Ser412 and Ser414 each carry phosphoserine.

This sequence belongs to the BZW family. In terms of assembly, interacts with EIF3E, EIF2S2 and EIF3C.

The protein resides in the cytoplasm. Its function is as follows. Translation initiation regulator which represses non-AUG initiated translation and repeat-associated non-AUG (RAN) initiated translation by acting as a competitive inhibitor of eukaryotic translation initiation factor 5 (EIF5) function. Increases the accuracy of translation initiation by impeding EIF5-dependent translation from non-AUG codons by competing with it for interaction with EIF2S2 within the 43S pre-initiation complex (PIC) in an EIF3C-binding dependent manner. The polypeptide is eIF5-mimic protein 1 (BZW2) (Macaca fascicularis (Crab-eating macaque)).